Consider the following 593-residue polypeptide: Class E vacuolar protein-sorting machinery protein HSE1 (593 aa).

Positions 15-144 (ATSDELTSEN…SLKSQDAVAE (130 aa)) constitute a VHS domain. The segment at 136 to 251 (LKSQDAVAED…AQPLSAATPP (116 aa)) is disordered. Residues 151–171 (PPREPTSEQLRAEDEELRRAL) show a composition bias toward basic and acidic residues. A UIM domain is found at 162–181 (AEDEELRRALELSIQDQGGR). The segment covering 175–193 (IQDQGGRNAWPSYNTEQAE) has biased composition (polar residues). Residues 194–227 (TSGSSAPAAASSSSSAYQPTSQSLAPAQQQQQQQ) show a composition bias toward low complexity. The segment covering 232-241 (HTNGTSSSAH) has biased composition (polar residues). The SH3 domain maps to 252–311 (AVASRVRALYDFSPTEPGELAFSRGEVIRVLDSVYEHWWRGEVRGEAGIFPVNYVEVLPD). The interval 474 to 593 (RHGYAQSAGA…SSYASHPTGH (120 aa)) is disordered. Residues 504–521 (QQITMAHQQQPHEQQYSS) show a composition bias toward polar residues. A compositionally biased stretch (basic and acidic residues) spans 523–539 (PHDDEKRRLFERARAES). A compositionally biased stretch (low complexity) spans 540–552 (EAFQQQHFQSQAH). Over residues 566-593 (PDASVLNQQMGNMNIGGSSSYASHPTGH) the composition is skewed to polar residues.

It belongs to the STAM family. In terms of assembly, component of the ESCRT-0 complex composed of HSE1 and VPS27.

It is found in the endosome membrane. Component of the ESCRT-0 complex which is the sorting receptor for ubiquitinated cargo proteins at the multivesicular body (MVB). The protein is Class E vacuolar protein-sorting machinery protein HSE1 (HSE1) of Mycosarcoma maydis (Corn smut fungus).